The chain runs to 114 residues: uncharacterized protein (114 aa).

An HIT domain is found at 6–114 (IFKNIIQRKI…LGGKKLKSFS (109 aa)).

This is an uncharacterized protein from Buchnera aphidicola subsp. Acyrthosiphon pisum (strain APS) (Acyrthosiphon pisum symbiotic bacterium).